The following is a 100-amino-acid chain: Small ribosomal subunit protein uS14c (100 aa).

Belongs to the universal ribosomal protein uS14 family. In terms of assembly, part of the 30S ribosomal subunit.

It localises to the plastid. It is found in the chloroplast. Binds 16S rRNA, required for the assembly of 30S particles. This is Small ribosomal subunit protein uS14c from Phaeodactylum tricornutum (strain CCAP 1055/1).